Consider the following 332-residue polypeptide: Cilia- and flagella-associated protein 119 (332 aa).

Residues 1–10 (MITPRSSQSL) are compositionally biased toward polar residues. Disordered regions lie at residues 1–70 (MITP…ANLF), 246–271 (EDEEATVEQAATPQEEEPEAVTEAEQ), and 308–332 (RLSNRLAALERPYQTPPSKGKSKAK). Residues 14-30 (VQTELEHSPKLQEEPDR) are compositionally biased toward basic and acidic residues. Residues 49 to 58 (ESPAEATSSP) are compositionally biased toward polar residues. Residues 287 to 308 (LNKELRQLQQLVEERLKESEER) are a coiled coil.

As to expression, specifically expressed in testis (at protein level).

The protein localises to the cell projection. Its subcellular location is the cilium. It localises to the flagellum. The protein resides in the cytoplasmic vesicle. It is found in the secretory vesicle. The protein localises to the acrosome. Its subcellular location is the cytoplasm. In Rattus norvegicus (Rat), this protein is Cilia- and flagella-associated protein 119.